A 120-amino-acid polypeptide reads, in one-letter code: uncharacterized protein (120 aa).

Residues 1-19 (MTSFAVVARLITRAPRVRA) form the signal peptide. Disordered regions lie at residues 48–71 (VAKK…DKAK) and 90–120 (DTVT…KNLK). Residues 90–103 (DTVTGKTEETKESI) show a composition bias toward basic and acidic residues.

This is an uncharacterized protein from Arabidopsis thaliana (Mouse-ear cress).